We begin with the raw amino-acid sequence, 574 residues long: Meiotically up-regulated gene 72 protein (574 aa).

The tract at residues 339–374 (VRAGTPQSSPNFNPAMRRSPVGAASRSPSRSTIGIS) is disordered. The residue at position 343 (Thr343) is a Phosphothreonine. A compositionally biased stretch (polar residues) spans 364-374 (RSPSRSTIGIS). At Ser392 the chain carries Phosphoserine. Disordered regions lie at residues 422-451 (TSPS…NKAG) and 495-574 (RNRR…RRMD). Over residues 541-554 (LYDTSRYPTRNSKP) the composition is skewed to polar residues.

It is found in the cytoplasm. Its function is as follows. Has a role in meiosis. This chain is Meiotically up-regulated gene 72 protein (mug72), found in Schizosaccharomyces pombe (strain 972 / ATCC 24843) (Fission yeast).